We begin with the raw amino-acid sequence, 236 residues long: Eukaryotic translation initiation factor 3 subunit J (236 aa).

A disordered region spans residues 1-65 (MADDWESAAD…APAKPKPNKA (65 aa)). Acidic residues predominate over residues 28-46 (GEDEDEDIKDSWEDEEEKK). Basic and acidic residues predominate over residues 47-58 (DEEKPTKTEAPA).

It belongs to the eIF-3 subunit J family. As to quaternary structure, component of the eukaryotic translation initiation factor 3 (eIF-3) complex. The eIF-3 complex interacts with pix.

It localises to the cytoplasm. Functionally, component of the eukaryotic translation initiation factor 3 (eIF-3) complex, which is involved in protein synthesis of a specialized repertoire of mRNAs and, together with other initiation factors, stimulates binding of mRNA and methionyl-tRNAi to the 40S ribosome. The eIF-3 complex specifically targets and initiates translation of a subset of mRNAs involved in cell proliferation. This Drosophila melanogaster (Fruit fly) protein is Eukaryotic translation initiation factor 3 subunit J.